The sequence spans 156 residues: Small ribosomal subunit protein uS7 (156 aa).

It belongs to the universal ribosomal protein uS7 family. In terms of assembly, part of the 30S ribosomal subunit. Contacts proteins S9 and S11.

Functionally, one of the primary rRNA binding proteins, it binds directly to 16S rRNA where it nucleates assembly of the head domain of the 30S subunit. Is located at the subunit interface close to the decoding center, probably blocks exit of the E-site tRNA. This Campylobacter curvus (strain 525.92) protein is Small ribosomal subunit protein uS7.